The following is a 322-amino-acid chain: Ferrochelatase (322 aa).

2 residues coordinate Fe cation: His-194 and Glu-275.

Belongs to the ferrochelatase family.

The protein localises to the cytoplasm. It catalyses the reaction heme b + 2 H(+) = protoporphyrin IX + Fe(2+). Its pathway is porphyrin-containing compound metabolism; protoheme biosynthesis; protoheme from protoporphyrin-IX: step 1/1. Catalyzes the ferrous insertion into protoporphyrin IX. This chain is Ferrochelatase, found in Yersinia enterocolitica serotype O:8 / biotype 1B (strain NCTC 13174 / 8081).